Here is a 389-residue protein sequence, read N- to C-terminus: Type 2 DNA topoisomerase 6 subunit A (389 aa).

Residues 13–161 (KARLRAAEVM…MLILSKEKGK (149 aa)) enclose the Topo IIA-type catalytic domain. The active-site O-(5'-phospho-DNA)-tyrosine intermediate is the tyrosine 107. Mg(2+) contacts are provided by glutamate 208 and aspartate 260.

Belongs to the TOP6A family. In terms of assembly, homodimer. Heterotetramer of two Top6A and two Top6B chains. Requires Mg(2+) as cofactor.

It catalyses the reaction ATP-dependent breakage, passage and rejoining of double-stranded DNA.. In terms of biological role, relaxes both positive and negative superturns and exhibits a strong decatenase activity. This Aeropyrum pernix (strain ATCC 700893 / DSM 11879 / JCM 9820 / NBRC 100138 / K1) protein is Type 2 DNA topoisomerase 6 subunit A.